Here is a 198-residue protein sequence, read N- to C-terminus: FMN-dependent NADH:quinone oxidoreductase (198 aa).

Residues Ser-10, 16-18 (SQS), 94-97 (MYNF), and 138-141 (TRGG) contribute to the FMN site.

Belongs to the azoreductase type 1 family. In terms of assembly, homodimer. It depends on FMN as a cofactor.

The catalysed reaction is 2 a quinone + NADH + H(+) = 2 a 1,4-benzosemiquinone + NAD(+). The enzyme catalyses N,N-dimethyl-1,4-phenylenediamine + anthranilate + 2 NAD(+) = 2-(4-dimethylaminophenyl)diazenylbenzoate + 2 NADH + 2 H(+). Functionally, quinone reductase that provides resistance to thiol-specific stress caused by electrophilic quinones. In terms of biological role, also exhibits azoreductase activity. Catalyzes the reductive cleavage of the azo bond in aromatic azo compounds to the corresponding amines. In Shewanella baltica (strain OS223), this protein is FMN-dependent NADH:quinone oxidoreductase.